The primary structure comprises 235 residues: 15,16-dihydrobiliverdin:ferredoxin oxidoreductase (235 aa).

The protein belongs to the HY2 family.

The enzyme catalyses 15,16-dihydrobiliverdin + oxidized 2[4Fe-4S]-[ferredoxin] = biliverdin IXalpha + reduced 2[4Fe-4S]-[ferredoxin] + 2 H(+). Catalyzes the two-electron reduction of biliverdin IX-alpha at the C15 methine bridge. In Synechococcus sp. (strain CC9605), this protein is 15,16-dihydrobiliverdin:ferredoxin oxidoreductase.